A 123-amino-acid chain; its full sequence is Large ribosomal subunit protein bL12 (123 aa).

Belongs to the bacterial ribosomal protein bL12 family. As to quaternary structure, homodimer. Part of the ribosomal stalk of the 50S ribosomal subunit. Forms a multimeric L10(L12)X complex, where L10 forms an elongated spine to which 2 to 4 L12 dimers bind in a sequential fashion. Binds GTP-bound translation factors.

Its function is as follows. Forms part of the ribosomal stalk which helps the ribosome interact with GTP-bound translation factors. Is thus essential for accurate translation. The chain is Large ribosomal subunit protein bL12 from Geobacillus thermodenitrificans (strain NG80-2).